Consider the following 527-residue polypeptide: Laccase-5 (527 aa).

A signal peptide spans 1-23; sequence MGKFHSFVNVVALSLSLSGRVFG. The 126-residue stretch at 25–150 folds into the Plastocyanin-like 1 domain; it reads IGPVTDLTIS…DGLRGPLVVY (126 aa). 2 N-linked (GlcNAc...) asparagine glycosylation sites follow: Asn74 and Asn77. Cu cation is bound by residues His87, His89, His132, and His134. 2 cysteine pairs are disulfide-bonded: Cys108–Cys516 and Cys140–Cys230. Asn156, Asn209, Asn233, Asn242, Asn276, Asn317, Asn358, Asn366, Asn393, and Asn402 each carry an N-linked (GlcNAc...) asparagine glycan. Positions 162-306 constitute a Plastocyanin-like 2 domain; it reads VDDDTTVITL…GGVNSAILRY (145 aa). The 126-residue stretch at 373–498 folds into the Plastocyanin-like 3 domain; that stretch reads TVPVLLQILS…AGFAIVFAED (126 aa). Residues His425, His428, His430, His480, Cys481, His482, and His486 each coordinate Cu cation.

The protein belongs to the multicopper oxidase family. Cu cation is required as a cofactor.

It localises to the secreted. The catalysed reaction is 4 hydroquinone + O2 = 4 benzosemiquinone + 2 H2O. Functionally, lignin degradation and detoxification of lignin-derived products. This is Laccase-5 (LCC5) from Trametes versicolor (White-rot fungus).